The following is a 132-amino-acid chain: Small ribosomal subunit protein uS8c (132 aa).

This sequence belongs to the universal ribosomal protein uS8 family. Part of the 30S ribosomal subunit.

The protein localises to the plastid. It localises to the chloroplast. Functionally, one of the primary rRNA binding proteins, it binds directly to 16S rRNA central domain where it helps coordinate assembly of the platform of the 30S subunit. This Nandina domestica (Heavenly bamboo) protein is Small ribosomal subunit protein uS8c (rps8).